The sequence spans 325 residues: Siroheme decarboxylase NirDL subunit (325 aa).

This sequence belongs to the Ahb/Nir family. As to quaternary structure, forms a complex composed of NirDL, NirG and NirH. All proteins are required for the total conversion of siroheme to didecarboxysiroheme.

It carries out the reaction siroheme + 2 H(+) = 12,18-didecarboxysiroheme + 2 CO2. Its pathway is porphyrin-containing compound metabolism. Functionally, involved in heme d1 biosynthesis. Catalyzes the decarboxylation of siroheme into didecarboxysiroheme. In Paracoccus denitrificans (strain Pd 1222), this protein is Siroheme decarboxylase NirDL subunit.